Here is a 662-residue protein sequence, read N- to C-terminus: 72 kDa type IV collagenase (662 aa).

Positions 1-29 (MEARVAWGALAGPLRVLCVLCCLLGRAIA) are cleaved as a signal peptide. Residues 30 to 109 (APSPIIKFPG…PRCGNPDVAN (80 aa)) constitute a propeptide, activation peptide. The Cysteine switch motif lies at 100-107 (PRCGNPDV). Residue cysteine 102 coordinates Zn(2+). Residues 110 to 221 (YNFFPRKPKW…LWTLGEGQVV (112 aa)) are collagenase-like 1. Aspartate 134 and aspartate 168 together coordinate Ca(2+). Residues histidine 178 and aspartate 180 each coordinate Zn(2+). Aspartate 185 and glycine 186 together coordinate Ca(2+). Histidine 193 contacts Zn(2+). Residues glycine 200, glycine 202, and aspartate 204 each coordinate Ca(2+). Residue histidine 206 participates in Zn(2+) binding. Ca(2+) contacts are provided by aspartate 208, aspartate 209, and glutamate 211. Residues 222–396 (RVKYGNADGE…WGFCPDQGYS (175 aa)) form a collagen-binding region. 3 Fibronectin type-II domains span residues 228–276 (ADGE…FCPH), 286–334 (ADGQ…FCPE), and 344–392 (SEGA…FCPD). Disulfide bonds link cysteine 233–cysteine 259, cysteine 247–cysteine 274, cysteine 291–cysteine 317, cysteine 305–cysteine 332, cysteine 349–cysteine 375, and cysteine 363–cysteine 390. Residues 397 to 467 (LFLVAAHEFG…GPTPTLGPVT (71 aa)) form a collagenase-like 2 region. Zn(2+) is bound at residue histidine 403. Residue glutamate 404 is part of the active site. Zn(2+) is bound by residues histidine 407 and histidine 413. The tract at residues 414 to 662 (SQDPGALMAP…GSIKSDWLGC (249 aa)) is required for inhibitor TIMP2 binding. Residues 446–465 (GPSPDADTDTGTGPTPTLGP) are disordered. Cysteine 471 and cysteine 662 are joined by a disulfide. 4 Hemopexin repeats span residues 474 to 518 (DIVF…WPEL), 519 to 565 (PEKI…GLPP), 567 to 615 (VQQV…WNAI), and 616 to 662 (PDNL…WLGC). Ca(2+)-binding residues include aspartate 478, aspartate 523, and aspartate 571. Asparagine 575 carries an N-linked (GlcNAc...) asparagine glycan. A Ca(2+)-binding site is contributed by aspartate 620. N-linked (GlcNAc...) asparagine glycosylation occurs at asparagine 644.

This sequence belongs to the peptidase M10A family. Interacts (via the C-terminal hemopexin-like domains-containing region) with the integrin alpha-V/beta-3; the interaction promotes vascular invasion in angiogenic vessels and melamoma cells. Interacts (via the C-terminal PEX domain) with TIMP2 (via the C-terminal); the interaction inhibits the degradation activity. Interacts with GSK3B. Ca(2+) is required as a cofactor. The cofactor is Zn(2+). Post-translationally, phosphorylation on multiple sites modulates enzymatic activity. Phosphorylated by PKC in vitro. In terms of processing, the propeptide is processed by MMP14 (MT-MMP1) and MMP16 (MT-MMP3). Autocatalytic cleavage in the C-terminal produces the anti-angiogenic peptide, PEX. This processing appears to be facilitated by binding integrinv/beta3.

It localises to the secreted. Its subcellular location is the extracellular space. It is found in the extracellular matrix. The protein localises to the membrane. The protein resides in the nucleus. It localises to the cytoplasm. Its subcellular location is the mitochondrion. The catalysed reaction is Cleavage of gelatin type I and collagen types IV, V, VII, X. Cleaves the collagen-like sequence Pro-Gln-Gly-|-Ile-Ala-Gly-Gln.. Ubiquitinous metalloproteinase that is involved in diverse functions such as remodeling of the vasculature, angiogenesis, tissue repair, tumor invasion, inflammation, and atherosclerotic plaque rupture. As well as degrading extracellular matrix proteins, can also act on several nonmatrix proteins such as big endothelial 1 and beta-type CGRP promoting vasoconstriction. Also cleaves KISS at a Gly-|-Leu bond. Appears to have a role in myocardial cell death pathways. Contributes to myocardial oxidative stress by regulating the activity of GSK3beta. Cleaves GSK3beta in vitro. Involved in the formation of the fibrovascular tissues. Its function is as follows. PEX, the C-terminal non-catalytic fragment of MMP2, possesses anti-angiogenic and anti-tumor properties and inhibits cell migration and cell adhesion to FGF2 and vitronectin. Ligand for integrin alpha-v/beta-3 on the surface of blood vessels. In terms of biological role, mediates the proteolysis of CHUK/IKKA and initiates a primary innate immune response by inducing mitochondrial-nuclear stress signaling with activation of the pro-inflammatory NF-kappaB, NFAT and IRF transcriptional pathways. This Mus musculus (Mouse) protein is 72 kDa type IV collagenase (Mmp2).